Reading from the N-terminus, the 389-residue chain is Probable protein phosphatase 2C 12 (389 aa).

The PPM-type phosphatase domain occupies 42–356 (VASLFSQRGK…DDCSAVCLFL (315 aa)). Mn(2+)-binding residues include D77 and G78. Residues 119–145 (AFSDDAAASSSADSSGNSSPQPSASAS) form a disordered region. Low complexity predominate over residues 121–145 (SDDAAASSSADSSGNSSPQPSASAS). 2 residues coordinate Mn(2+): D301 and D347.

The protein belongs to the PP2C family. The cofactor is Mg(2+). It depends on Mn(2+) as a cofactor.

It carries out the reaction O-phospho-L-seryl-[protein] + H2O = L-seryl-[protein] + phosphate. It catalyses the reaction O-phospho-L-threonyl-[protein] + H2O = L-threonyl-[protein] + phosphate. The sequence is that of Probable protein phosphatase 2C 12 from Oryza sativa subsp. japonica (Rice).